The sequence spans 170 residues: N-glycosidase R617 (170 aa).

This sequence belongs to the YbiA family.

It carries out the reaction 2,5-diamino-6-hydroxy-4-(5-phosphoribosylamino)-pyrimidine + H2O = 2,5,6-triamino-4-hydroxypyrimidine + D-ribose 5-phosphate. The enzyme catalyses 5-amino-6-(5-phospho-D-ribosylamino)uracil + H2O = 5,6-diaminouracil + D-ribose 5-phosphate. Catalyzes the hydrolysis of the N-glycosidic bond in the first two intermediates of riboflavin biosynthesis, which are highly reactive metabolites, yielding relatively innocuous products. Thus, can divert a surplus of harmful intermediates into relatively harmless products and pre-empt the damage these intermediates would otherwise do. May act on other substrates in vivo. The chain is N-glycosidase R617 from Acanthamoeba polyphaga mimivirus (APMV).